Consider the following 298-residue polypeptide: Ribosomal protein L11 methyltransferase (298 aa).

S-adenosyl-L-methionine contacts are provided by Thr150, Gly171, Asp193, and Asn232.

This sequence belongs to the methyltransferase superfamily. PrmA family.

Its subcellular location is the cytoplasm. The catalysed reaction is L-lysyl-[protein] + 3 S-adenosyl-L-methionine = N(6),N(6),N(6)-trimethyl-L-lysyl-[protein] + 3 S-adenosyl-L-homocysteine + 3 H(+). Functionally, methylates ribosomal protein L11. This Chromobacterium violaceum (strain ATCC 12472 / DSM 30191 / JCM 1249 / CCUG 213 / NBRC 12614 / NCIMB 9131 / NCTC 9757 / MK) protein is Ribosomal protein L11 methyltransferase.